A 141-amino-acid polypeptide reads, in one-letter code: Hemoglobin subunit alpha (141 aa).

The 141-residue stretch at 1 to 141 (VLSPEDKNHV…VSTVLTSKYR (141 aa)) folds into the Globin domain. A Phosphoserine modification is found at Ser3. Lys7 is subject to N6-succinyllysine. Lys16 is subject to N6-acetyllysine; alternate. An N6-succinyllysine; alternate modification is found at Lys16. The residue at position 24 (Tyr24) is a Phosphotyrosine. Ser35 carries the phosphoserine modification. The residue at position 40 (Lys40) is an N6-succinyllysine. Ser49 carries the phosphoserine modification. His58 provides a ligand contact to O2. His87 contributes to the heme b binding site. A Phosphoserine modification is found at Ser102. Thr108 carries the phosphothreonine modification. Residues Ser124 and Ser131 each carry the phosphoserine modification. Thr134 and Thr137 each carry phosphothreonine. Residue Ser138 is modified to Phosphoserine.

The protein belongs to the globin family. As to quaternary structure, heterotetramer of two alpha chains and two beta chains. Red blood cells.

Functionally, involved in oxygen transport from the lung to the various peripheral tissues. Hemopressin acts as an antagonist peptide of the cannabinoid receptor CNR1. Hemopressin-binding efficiently blocks cannabinoid receptor CNR1 and subsequent signaling. The polypeptide is Hemoglobin subunit alpha (HBA) (Spalax ehrenbergi (Middle East blind mole rat)).